The chain runs to 208 residues: Ribosomal RNA large subunit methyltransferase E (208 aa).

S-adenosyl-L-methionine contacts are provided by Gly62, Trp64, Asp82, Asp98, and Asp123. Lys163 (proton acceptor) is an active-site residue.

Belongs to the class I-like SAM-binding methyltransferase superfamily. RNA methyltransferase RlmE family.

It localises to the cytoplasm. The catalysed reaction is uridine(2552) in 23S rRNA + S-adenosyl-L-methionine = 2'-O-methyluridine(2552) in 23S rRNA + S-adenosyl-L-homocysteine + H(+). Functionally, specifically methylates the uridine in position 2552 of 23S rRNA at the 2'-O position of the ribose in the fully assembled 50S ribosomal subunit. The chain is Ribosomal RNA large subunit methyltransferase E from Haemophilus ducreyi (strain 35000HP / ATCC 700724).